Consider the following 215-residue polypeptide: Intraflagellar transport protein 43 homolog B (215 aa).

Residues 1–107 (MDDHLKLGDS…SDGEGDIPVI (107 aa)) are disordered.

The protein belongs to the IFT43 family. Component of IFT complex A.

Functionally, component of IFT complex A (IFT-A) involved in retrograde ciliary transport along microtubules from the ciliary tip to the base. This Salmo salar (Atlantic salmon) protein is Intraflagellar transport protein 43 homolog B (ift43b).